The sequence spans 481 residues: Beta-1,3-glucan-binding protein (481 aa).

The signal sequence occupies residues 1 to 17 (MKVLVVFIFCLVRSTFG). Residues 19–123 (FEVPDALVEV…QKFVVKQLLD (105 aa)) enclose the CBM39 domain. The 271-residue stretch at 211-481 (HRLTIRPVPS…EVDYVKVSAL (271 aa)) folds into the GH16 domain. A glycan (N-linked (GlcNAc...) asparagine) is linked at Asn-467.

Belongs to the insect beta-1,3-glucan binding protein family. In terms of processing, the N-terminus is blocked. Hemolymph.

It localises to the secreted. Functionally, involved in the recognition of invading microorganisms. Binds specifically to beta-1,3-glucan and activates the phenoloxidase cascade. In Tenebrio molitor (Yellow mealworm beetle), this protein is Beta-1,3-glucan-binding protein (GRP).